Reading from the N-terminus, the 145-residue chain is Alpha-amylase/trypsin inhibitor CM1 (145 aa).

The signal sequence occupies residues 1–25 (MASKSSISPLLLATVLVSVFAAATA).

The protein belongs to the protease inhibitor I6 (cereal trypsin/alpha-amylase inhibitor) family. As to quaternary structure, subunit of the tetrameric inhibitor. Endosperm.

The protein localises to the secreted. Alpha-amylase/trypsin inhibitor. It could be involved in insect defense mechanisms. The polypeptide is Alpha-amylase/trypsin inhibitor CM1 (Triticum aestivum (Wheat)).